A 521-amino-acid polypeptide reads, in one-letter code: ATP synthase subunit beta (521 aa).

Low complexity-rich tracts occupy residues M1–A21 and P28–G42. The interval M1 to G42 is disordered. G199–T206 contacts ATP.

Belongs to the ATPase alpha/beta chains family. F-type ATPases have 2 components, CF(1) - the catalytic core - and CF(0) - the membrane proton channel. CF(1) has five subunits: alpha(3), beta(3), gamma(1), delta(1), epsilon(1). CF(0) has three main subunits: a(1), b(2) and c(9-12). The alpha and beta chains form an alternating ring which encloses part of the gamma chain. CF(1) is attached to CF(0) by a central stalk formed by the gamma and epsilon chains, while a peripheral stalk is formed by the delta and b chains.

The protein localises to the cell inner membrane. It catalyses the reaction ATP + H2O + 4 H(+)(in) = ADP + phosphate + 5 H(+)(out). Functionally, produces ATP from ADP in the presence of a proton gradient across the membrane. The catalytic sites are hosted primarily by the beta subunits. This Brucella canis (strain ATCC 23365 / NCTC 10854 / RM-666) protein is ATP synthase subunit beta.